A 690-amino-acid polypeptide reads, in one-letter code: UvrABC system protein B (690 aa).

A Helicase ATP-binding domain is found at 30–188; sequence QGVMDGQTNQ…QELISLHFVR (159 aa). Residue 43–50 coordinates ATP; sequence GVTGSGKT. Positions 96–119 match the Beta-hairpin motif; that stretch reads YYDFYQPEAYIPTMDKYIAKDLKI. Residues 435–601 enclose the Helicase C-terminal domain; that stretch reads QIDDLLEEIR…SIVKSVDQVL (167 aa). One can recognise a UVR domain in the interval 641-676; sequence YAMAEELRLEMQEAAESMEFEKAAYLRDEVTKLEDA.

It belongs to the UvrB family. As to quaternary structure, forms a heterotetramer with UvrA during the search for lesions. Interacts with UvrC in an incision complex.

It is found in the cytoplasm. Functionally, the UvrABC repair system catalyzes the recognition and processing of DNA lesions. A damage recognition complex composed of 2 UvrA and 2 UvrB subunits scans DNA for abnormalities. Upon binding of the UvrA(2)B(2) complex to a putative damaged site, the DNA wraps around one UvrB monomer. DNA wrap is dependent on ATP binding by UvrB and probably causes local melting of the DNA helix, facilitating insertion of UvrB beta-hairpin between the DNA strands. Then UvrB probes one DNA strand for the presence of a lesion. If a lesion is found the UvrA subunits dissociate and the UvrB-DNA preincision complex is formed. This complex is subsequently bound by UvrC and the second UvrB is released. If no lesion is found, the DNA wraps around the other UvrB subunit that will check the other stand for damage. The polypeptide is UvrABC system protein B (Chlorobium phaeobacteroides (strain BS1)).